The following is a 301-amino-acid chain: Phosphatidylglycerol--prolipoprotein diacylglyceryl transferase (301 aa).

A run of 4 helical transmembrane segments spans residues 10-30 (IAFS…LAGF), 57-77 (LLFY…MLFY), 92-112 (VWEG…AVAW), and 119-139 (MHMF…LGFG). Residue R140 participates in a 1,2-diacyl-sn-glycero-3-phospho-(1'-sn-glycerol) binding. 3 helical membrane-spanning segments follow: residues 202–222 (PSQL…LWLF), 230–250 (YAVS…VEFV), and 264–284 (LTRG…LFWL).

Belongs to the Lgt family.

The protein resides in the cell inner membrane. The catalysed reaction is L-cysteinyl-[prolipoprotein] + a 1,2-diacyl-sn-glycero-3-phospho-(1'-sn-glycerol) = an S-1,2-diacyl-sn-glyceryl-L-cysteinyl-[prolipoprotein] + sn-glycerol 1-phosphate + H(+). Its pathway is protein modification; lipoprotein biosynthesis (diacylglyceryl transfer). Catalyzes the transfer of the diacylglyceryl group from phosphatidylglycerol to the sulfhydryl group of the N-terminal cysteine of a prolipoprotein, the first step in the formation of mature lipoproteins. The polypeptide is Phosphatidylglycerol--prolipoprotein diacylglyceryl transferase (Xylella fastidiosa (strain M23)).